The chain runs to 196 residues: ATP-dependent Clp protease proteolytic subunit (196 aa).

Residue serine 101 is the Nucleophile of the active site. Histidine 126 is a catalytic residue.

It belongs to the peptidase S14 family. As to quaternary structure, component of the chloroplastic Clp protease core complex.

It is found in the plastid. It localises to the chloroplast stroma. It carries out the reaction Hydrolysis of proteins to small peptides in the presence of ATP and magnesium. alpha-casein is the usual test substrate. In the absence of ATP, only oligopeptides shorter than five residues are hydrolyzed (such as succinyl-Leu-Tyr-|-NHMec, and Leu-Tyr-Leu-|-Tyr-Trp, in which cleavage of the -Tyr-|-Leu- and -Tyr-|-Trp bonds also occurs).. In terms of biological role, cleaves peptides in various proteins in a process that requires ATP hydrolysis. Has a chymotrypsin-like activity. Plays a major role in the degradation of misfolded proteins. In Populus trichocarpa (Western balsam poplar), this protein is ATP-dependent Clp protease proteolytic subunit.